A 77-amino-acid chain; its full sequence is NAD(P)H-quinone oxidoreductase subunit L (77 aa).

A run of 2 helical transmembrane segments spans residues 10–30 (LLIA…LPAG) and 48–68 (LVMY…SPFL).

The protein belongs to the complex I NdhL subunit family. In terms of assembly, NDH-1 can be composed of about 15 different subunits; different subcomplexes with different compositions have been identified which probably have different functions.

The protein resides in the cellular thylakoid membrane. The enzyme catalyses a plastoquinone + NADH + (n+1) H(+)(in) = a plastoquinol + NAD(+) + n H(+)(out). It catalyses the reaction a plastoquinone + NADPH + (n+1) H(+)(in) = a plastoquinol + NADP(+) + n H(+)(out). NDH-1 shuttles electrons from an unknown electron donor, via FMN and iron-sulfur (Fe-S) centers, to quinones in the respiratory and/or the photosynthetic chain. The immediate electron acceptor for the enzyme in this species is believed to be plastoquinone. Couples the redox reaction to proton translocation, and thus conserves the redox energy in a proton gradient. Cyanobacterial NDH-1 also plays a role in inorganic carbon-concentration. The polypeptide is NAD(P)H-quinone oxidoreductase subunit L (Picosynechococcus sp. (strain ATCC 27264 / PCC 7002 / PR-6) (Agmenellum quadruplicatum)).